The chain runs to 284 residues: D-tagatose-1,6-bisphosphate aldolase subunit GatY (284 aa).

The active-site Proton donor is Asp-82. Zn(2+)-binding residues include His-83 and His-180. Gly-181 contacts dihydroxyacetone phosphate. A Zn(2+)-binding site is contributed by His-208. Dihydroxyacetone phosphate-binding positions include 209–211 (GAS) and 230–233 (NVAT).

The protein belongs to the class II fructose-bisphosphate aldolase family. TagBP aldolase GatY subfamily. As to quaternary structure, forms a complex with GatZ. It depends on Zn(2+) as a cofactor.

It carries out the reaction D-tagatofuranose 1,6-bisphosphate = D-glyceraldehyde 3-phosphate + dihydroxyacetone phosphate. It functions in the pathway carbohydrate metabolism; D-tagatose 6-phosphate degradation; D-glyceraldehyde 3-phosphate and glycerone phosphate from D-tagatose 6-phosphate: step 2/2. Functionally, catalytic subunit of the tagatose-1,6-bisphosphate aldolase GatYZ, which catalyzes the reversible aldol condensation of dihydroxyacetone phosphate (DHAP or glycerone-phosphate) with glyceraldehyde 3-phosphate (G3P) to produce tagatose 1,6-bisphosphate (TBP). Requires GatZ subunit for full activity and stability. Is involved in the catabolism of galactitol. The sequence is that of D-tagatose-1,6-bisphosphate aldolase subunit GatY from Escherichia coli (strain SMS-3-5 / SECEC).